A 1016-amino-acid polypeptide reads, in one-letter code: DENN domain-containing protein 1A (1016 aa).

Residues 13-145 (FEVYVEVAYP…HRLPIPDPGV (133 aa)) enclose the uDENN domain. One can recognise a cDENN domain in the interval 162-298 (ELPSIPENRN…VISSLKNRLK (137 aa)). A dDENN domain is found at 300-378 (VSTTTGDGVA…DGRLDLLNSG (79 aa)). An FXDXF motif motif is present at residues 381-385 (FSDVF). The interval 453–565 (DITENGCVSS…GPTPAPPDRA (113 aa)) is disordered. Ser473 bears the Phosphoserine mark. Residues 479–489 (QDPRLREDRRP) show a composition bias toward basic and acidic residues. Basic residues predominate over residues 500 to 509 (PRPHVVRRPK). Position 519 is a phosphothreonine (Thr519). Residues Ser520, Ser522, Ser523, Ser536, Ser538, and Ser546 each carry the phosphoserine modification. The Clathrin box motif lies at 569–578 (DLLEDVFSSL). Ser592 bears the Phosphoserine mark. The disordered stretch occupies residues 681–737 (LSPSIKEETPIPTPGSITIPRPQGRKTPELGIVPPPPTARPAKLQAAGGPLGDFSSE). Phosphoserine is present on Ser750. Arg760 is subject to Omega-N-methylarginine. Disordered regions lie at residues 763 to 783 (PQGP…AGTG) and 935 to 1016 (SARA…ETFE). Positions 954 to 970 (LLPPRPPQSLQPTPQPS) are enriched in pro residues. Basic and acidic residues-rich tracts occupy residues 977–988 (DPFEDLLRKTKQ) and 1007–1016 (QLRRQWETFE).

Interacts with RAB35. Interacts with clathrin and with the adapter protein complex 2, AP-2. Interacts with ITSN1 and SH3GL2. Interacts (when phosphorylated) with YWHAE. In terms of processing, phosphorylated on serine and/or threonine in an Akt-dependent manner. Phosphorylation probably regulates the guanine nucleotide exchange factor (GEF) activity, possibly by disrupting an intramolecular interaction between the DENN domain and the C-terminus of the protein, thereby relieving the autoinhibition.

The protein resides in the cytoplasmic vesicle. Its subcellular location is the clathrin-coated vesicle membrane. It localises to the presynaptic cell membrane. Its activity is regulated as follows. The guanine nucleotide exchange factor (GEF) activity is autoinhibited. Autoinhibition may be the result of intramolecular interaction between the DENN domain and the C-terminus, which is disrupted upon phosphorylation. Activation is regulated by Akt activation. In terms of biological role, guanine nucleotide exchange factor (GEF) regulating clathrin-mediated endocytosis through RAB35 activation. Promotes the exchange of GDP to GTP, converting inactive GDP-bound RAB35 into its active GTP-bound form. Regulates clathrin-mediated endocytosis of synaptic vesicles and mediates exit from early endosomes. Binds phosphatidylinositol-phosphates (PtdInsPs), with some preference for PtdIns(3)P. This chain is DENN domain-containing protein 1A (Dennd1a), found in Mus musculus (Mouse).